Consider the following 258-residue polypeptide: Pyridoxine 5'-phosphate synthase (258 aa).

3-amino-2-oxopropyl phosphate is bound at residue asparagine 16. Residue 18 to 19 (DH) participates in 1-deoxy-D-xylulose 5-phosphate binding. Arginine 27 serves as a coordination point for 3-amino-2-oxopropyl phosphate. Histidine 52 serves as the catalytic Proton acceptor. Residues arginine 54 and histidine 59 each contribute to the 1-deoxy-D-xylulose 5-phosphate site. Glutamate 79 serves as the catalytic Proton acceptor. Residue threonine 109 participates in 1-deoxy-D-xylulose 5-phosphate binding. Residue histidine 200 is the Proton donor of the active site. 3-amino-2-oxopropyl phosphate is bound by residues glycine 201 and 222-223 (GH).

The protein belongs to the PNP synthase family. In terms of assembly, homooctamer; tetramer of dimers.

Its subcellular location is the cytoplasm. The enzyme catalyses 3-amino-2-oxopropyl phosphate + 1-deoxy-D-xylulose 5-phosphate = pyridoxine 5'-phosphate + phosphate + 2 H2O + H(+). It functions in the pathway cofactor biosynthesis; pyridoxine 5'-phosphate biosynthesis; pyridoxine 5'-phosphate from D-erythrose 4-phosphate: step 5/5. Functionally, catalyzes the complicated ring closure reaction between the two acyclic compounds 1-deoxy-D-xylulose-5-phosphate (DXP) and 3-amino-2-oxopropyl phosphate (1-amino-acetone-3-phosphate or AAP) to form pyridoxine 5'-phosphate (PNP) and inorganic phosphate. The protein is Pyridoxine 5'-phosphate synthase of Burkholderia lata (strain ATCC 17760 / DSM 23089 / LMG 22485 / NCIMB 9086 / R18194 / 383).